Here is a 340-residue protein sequence, read N- to C-terminus: Ketol-acid reductoisomerase (NADP(+)) (340 aa).

The 180-residue stretch at 3 to 182 (VQMEYEKDVK…GAARVGLLET (180 aa)) folds into the KARI N-terminal Rossmann domain. Residues 26–29 (YGSQ), arginine 49, serine 53, and 83–86 (DEIQ) each bind NADP(+). Residue histidine 108 is part of the active site. Glycine 134 is a binding site for NADP(+). Residues 183–328 (TYKEETEEDL…AELRKAMPFV (146 aa)) form the KARI C-terminal knotted domain. Aspartate 191, glutamate 195, glutamate 227, and glutamate 231 together coordinate Mg(2+). Serine 252 is a binding site for substrate.

This sequence belongs to the ketol-acid reductoisomerase family. Mg(2+) is required as a cofactor.

The enzyme catalyses (2R)-2,3-dihydroxy-3-methylbutanoate + NADP(+) = (2S)-2-acetolactate + NADPH + H(+). It carries out the reaction (2R,3R)-2,3-dihydroxy-3-methylpentanoate + NADP(+) = (S)-2-ethyl-2-hydroxy-3-oxobutanoate + NADPH + H(+). It participates in amino-acid biosynthesis; L-isoleucine biosynthesis; L-isoleucine from 2-oxobutanoate: step 2/4. It functions in the pathway amino-acid biosynthesis; L-valine biosynthesis; L-valine from pyruvate: step 2/4. In terms of biological role, involved in the biosynthesis of branched-chain amino acids (BCAA). Catalyzes an alkyl-migration followed by a ketol-acid reduction of (S)-2-acetolactate (S2AL) to yield (R)-2,3-dihydroxy-isovalerate. In the isomerase reaction, S2AL is rearranged via a Mg-dependent methyl migration to produce 3-hydroxy-3-methyl-2-ketobutyrate (HMKB). In the reductase reaction, this 2-ketoacid undergoes a metal-dependent reduction by NADPH to yield (R)-2,3-dihydroxy-isovalerate. The protein is Ketol-acid reductoisomerase (NADP(+)) of Streptococcus thermophilus (strain ATCC BAA-491 / LMD-9).